The primary structure comprises 308 residues: Cyclin-D4-1 (308 aa).

Belongs to the cyclin family. Cyclin D subfamily. As to quaternary structure, interacts with CDKA-1, CDKB2-1, KRP4/ICK7, KRP5/ICK3, KRP6/ICK4 and KRP7/ICK5. As to expression, expressed in shoot apical meristem, leaf primordia vascular tissues and tapetum of anthers.

Functionally, may activate cell cycle in the root apical meristem (RAM) and promote embryonic root (radicle) protrusion. In Arabidopsis thaliana (Mouse-ear cress), this protein is Cyclin-D4-1 (CYCD4-1).